We begin with the raw amino-acid sequence, 135 residues long: Transcriptional activator protein (135 aa).

The short motif at 17 to 32 (KAQHKVAKKRAIRRSR) is the Nuclear localization signal element. Residues 37 to 54 (CGCSYYIHINCRNYGFSH) fold into a zinc finger. Residues 82–102 (AAPSNSSRVPDVCDPNTDNVQ) are disordered. The interval 120–135 (ALPLFDGDFWDDIIDF) is transactivation.

Belongs to the geminiviridae transcriptional activator protein family. Monomer. Homodimer. Homooligomer. Self-interaction correlates with nuclear localization and efficient activation of transcription. Monomers suppress local silencing by interacting with and inactivating host adenosine kinase 2 (ADK2) in the cytoplasm. Interacts with and inhibits host SNF1 kinase. Binds to ssDNA. In terms of processing, phosphorylated.

It localises to the host nucleus. It is found in the host cytoplasm. Strong activator of the late viral genes promoters. Enhances the expression of the capsid protein and nuclear shuttle protein. Acts as a suppressor of RNA-mediated gene silencing, also known as post-transcriptional gene silencing (PTGS), a mechanism of plant viral defense that limits the accumulation of viral RNAs. Suppresses the host RNA silencing by inhibiting adenosine kinase 2 (ADK2), a kinase involved in a general methylation pathway. Also suppresses the host basal defense by interacting with and inhibiting SNF1 kinase, a key regulator of cell metabolism implicated in innate antiviral defense. Determines pathogenicity. This chain is Transcriptional activator protein, found in Mungbean yellow mosaic virus (strain Vigna) (MYMV).